The following is a 480-amino-acid chain: Cytochrome P450 monooxygenase ORF11 (480 aa).

Residues leucine 9–alanine 29 traverse the membrane as a helical segment. N-linked (GlcNAc...) asparagine glycosylation is found at asparagine 265 and asparagine 352. Cysteine 449 contributes to the heme binding site.

Belongs to the cytochrome P450 family. The cofactor is heme.

The protein resides in the membrane. The protein operates within sesquiterpene biosynthesis. Cytochrome P450 monooxygenase; part of the gene cluster that mediates the biosynthesis of PR-toxin, a bicyclic sesquiterpene belonging to the eremophilane class and acting as a mycotoxin. The first step of the pathway is catalyzed by the aristolochene synthase which performs the cyclization of trans,trans-farnesyl diphosphate (FPP) to the bicyclic sesquiterpene aristolochene. Following the formation of aristolochene, the non-oxygenated aristolochene is converted to the trioxygenated intermediate eremofortin B, via 7-epi-neopetasone. This conversion appears to involve three enzymes, a hydroxysterol oxidase-like enzyme, the quinone-oxidase prx3 that forms the quinone-type-structure in the bicyclic nucleus of aristolochene with the C8-oxo group and the C-3 hydroxyl group, and the P450 monooxygenase ORF6 that introduces the epoxide at the double bond between carbons 1 and 2. No monoxy or dioxy-intermediates have been reported to be released to the broth, so these three early oxidative reactions may be coupled together. Eremofortin B is further oxidized by another P450 monooxygenase, that introduces a second epoxide between carbons 7 and 11 prior to acetylation to eremofortin A by the acetyltransferase ORF8. The second epoxidation may be performed by a second P450 monooxygenase. After the acetylation step, eremofortin A is converted to eremofortin C and then to PR-toxin. First the conversion of eremofortin A to eremofortin C proceeds by oxidation of the side chain of the molecule at C-12 and is catalyzed by the short-chain oxidoreductase prx1. The cytochrome P450 monooxygenase ORF6 is probably also involved in this step. The primary alcohol formed at C-12 is finally oxidized by the short-chain alcohol dehydrogenase prx4 that forms PR-toxin. The sequence is that of Cytochrome P450 monooxygenase ORF11 from Penicillium roqueforti (strain FM164).